The chain runs to 462 residues: N-myc proto-oncogene protein (462 aa).

The interval 19 to 47 (LEFDSLQPCFYPDEDDFYFGGPDSTPPGE) is interaction with AURKA. An interaction with AURKA and FBXW7 region spans residues 61–90 (LSPSRAFPEHSPEPSNWATEMLLPEADLWG). The short motif at 76-85 (NWATEMLLPE) is the 9aaTAD element. Disordered stretches follow at residues 134–177 (KLQH…ATLP), 232–289 (AAPA…SSNN), and 332–390 (APSP…LERQ). Low complexity-rich tracts occupy residues 143 to 176 (GVSS…GATL) and 232 to 244 (AAPA…PASS). A compositionally biased stretch (acidic residues) spans 257–276 (TLSDSDDEDDEEEDEEEEID). Serine 259 and serine 261 each carry phosphoserine; by CK2. Residues 379–431 (ERRRNHNILERQRRNDLRSSFLTLRDHVPELVKNEKAAKVVILKKATEYVHAL) form the bHLH domain. The leucine-zipper stretch occupies residues 431 to 452 (LQANEHQLLLEKEKLQARQQQL).

As to quaternary structure, efficient DNA binding requires dimerization with another bHLH protein. Binds DNA as a heterodimer with MAX. Interacts with KDM5A, KDM5B and HUWE1. Interacts with MYCNOS. Interacts with AURKA; interaction is phospho-independent and triggers AURKA activation; AURKA competes with FBXW7 for binding to unphosphorylated MYCN but not for binding to unphosphorylated MYCN. Interacts with FBXW7; FBXW7 competes with AURKA for binding to unphosphorylated MYCN but not for binding to phosphorylated MYCN. Phosphorylated by GSK3-beta which may promote its degradation. Phosphorylated by AURKA.

It localises to the nucleus. In terms of biological role, positively regulates the transcription of MYCNOS in neuroblastoma cells. The polypeptide is N-myc proto-oncogene protein (Mycn) (Mus musculus (Mouse)).